A 59-amino-acid chain; its full sequence is Probable stress-associated endoplasmic reticulum protein (59 aa).

Residues 1 to 30 (MSQSRTLRQKSQKYQENIEKRGVASPKKKE) form a disordered region. At 1–34 (MSQSRTLRQKSQKYQENIEKRGVASPKKKEDGLN) the chain is on the cytoplasmic side. Basic and acidic residues predominate over residues 16-30 (ENIEKRGVASPKKKE). The chain crosses the membrane as a helical; Anchor for type IV membrane protein span at residues 35 to 55 (INPYVLGFIIFVVVGSTLLQI). The Extracellular portion of the chain corresponds to 56–59 (LKGQ).

Belongs to the RAMP4 family.

The protein localises to the membrane. It is found in the endoplasmic reticulum membrane. Its function is as follows. May interact with target proteins during translocation into the lumen of the endoplasmic reticulum. May protect unfolded target proteins against degradation and facilitate correct glycosylation. The sequence is that of Probable stress-associated endoplasmic reticulum protein (serp) from Dictyostelium discoideum (Social amoeba).